We begin with the raw amino-acid sequence, 159 residues long: ATP synthase subunit b 2 (159 aa).

A helical membrane pass occupies residues 1–21; it reads MDATFWAFIALVIFVAIVVYM.

Belongs to the ATPase B chain family. As to quaternary structure, F-type ATPases have 2 components, F(1) - the catalytic core - and F(0) - the membrane proton channel. F(1) has five subunits: alpha(3), beta(3), gamma(1), delta(1), epsilon(1). F(0) has three main subunits: a(1), b(2) and c(10-14). The alpha and beta chains form an alternating ring which encloses part of the gamma chain. F(1) is attached to F(0) by a central stalk formed by the gamma and epsilon chains, while a peripheral stalk is formed by the delta and b chains.

Its subcellular location is the cell inner membrane. F(1)F(0) ATP synthase produces ATP from ADP in the presence of a proton or sodium gradient. F-type ATPases consist of two structural domains, F(1) containing the extramembraneous catalytic core and F(0) containing the membrane proton channel, linked together by a central stalk and a peripheral stalk. During catalysis, ATP synthesis in the catalytic domain of F(1) is coupled via a rotary mechanism of the central stalk subunits to proton translocation. In terms of biological role, component of the F(0) channel, it forms part of the peripheral stalk, linking F(1) to F(0). This Brucella ovis (strain ATCC 25840 / 63/290 / NCTC 10512) protein is ATP synthase subunit b 2.